We begin with the raw amino-acid sequence, 62 residues long: UPF0434 protein SPO3421 (62 aa).

It belongs to the UPF0434 family.

In Ruegeria pomeroyi (strain ATCC 700808 / DSM 15171 / DSS-3) (Silicibacter pomeroyi), this protein is UPF0434 protein SPO3421.